The primary structure comprises 645 residues: Octopamine receptor Oamb (645 aa).

At 1–25 (MNETECEDLIKSVKWTEPANLISLA) the chain is on the extracellular side. An N-linked (GlcNAc...) asparagine glycan is attached at N2. Residues 26–46 (VLEFINVLVIGGNCLVIAAVF) traverse the membrane as a helical segment. The Cytoplasmic portion of the chain corresponds to 47–56 (CSNKLRSVTN). A helical transmembrane segment spans residues 57–77 (FFIVNLAVADLLVGLAVLPFS). The Extracellular portion of the chain corresponds to 78–94 (ATWEVFKVWIFGDLWCR). C93 and C287 are disulfide-bonded. A helical transmembrane segment spans residues 95-115 (IWLAVDVWMCTASILNLCAIS). Over 116–138 (LDRYVAVTRPVTYPSIMSTKKAK) the chain is Cytoplasmic. A helical membrane pass occupies residues 139–159 (SLIAGIWVLSFFICFPPLVGW). Residues 160–295 (KDQKAVIQPT…KCELTNDRGY (136 aa)) lie on the Extracellular side of the membrane. N174 carries an N-linked (GlcNAc...) asparagine glycan. The disordered stretch occupies residues 190–212 (QLGLDSIKDQGEASLPPSPPHIG). The chain crosses the membrane as a helical span at residues 296–316 (VLYSALGSFYIPMFVMLFFYW). The Cytoplasmic segment spans residues 317-520 (RIYRAAVRTT…FRMETKAAKT (204 aa)). Disordered stretches follow at residues 358–386 (GRGS…PSPE) and 479–500 (RQSN…KKMG). Residues 369–385 (SNGSTQSTTTTLGTPSP) are compositionally biased toward low complexity. The chain crosses the membrane as a helical span at residues 521–541 (LAIIVGMFIFCWCPFFTMYII). Residues 542–551 (RPFCQDCVDP) lie on the Extracellular side of the membrane. The chain crosses the membrane as a helical span at residues 552–572 (LLFSVLFWLGYCNSAVNPMIY). The Cytoplasmic portion of the chain corresponds to 573–645 (ALFSKDFRFA…HHSEMSNDPR (73 aa)). The segment at 621–645 (TPSAAAHSFGDESELHHSEMSNDPR) is disordered. Basic and acidic residues predominate over residues 629–645 (FGDESELHHSEMSNDPR).

This sequence belongs to the G-protein coupled receptor 1 family. As to expression, highly enriched in mushroom body neuropil and in the ellipsoid body (at protein level). Expressed in oviduct epithelium (at protein level). Expressed in the adult and larval brain, thoracic and abdominal ganglia, terminal cells of the larval tracheal system, muscle, mature eggs and reproductive system.

It localises to the cell membrane. Functionally, receptor for octopamine (OA) which is a neurotransmitter, neurohormone and neuromodulator in invertebrates. Stimulates intracellular accumulation of cAMP and Ca(2+) following ligand binding. Required for ovulation. Following activation on mature follicle cells by OA, induces activity of the metalloprotease Mmp2 which leads to breakdown of the posterior follicle wall, resulting in ovulation. Ligand binding probably also leads to activation of CamKII which is also required for ovulation. Modulates sleep/wake behavior by acting in neurons of the pars intercerebralis to promote wakefulness. Plays a role in courtship conditioning where the courtship behavior of males rejected by already mated females is inhibited with further females. Required in the mushroom body for appetitive olfactory learning. Specifically conveys the short-term reinforcing effects of sweet taste. In insulin-producing cells of the brain, plays a role in inhibiting transcription of insulin-like peptide Ilp3. Also plays a role in social behavior by modulating male agression. In Drosophila melanogaster (Fruit fly), this protein is Octopamine receptor Oamb.